Consider the following 280-residue polypeptide: Inner membrane ABC transporter permease protein YcjP (280 aa).

The Cytoplasmic segment spans residues 1–10 (MATNKRTLSR). Residues 11-31 (IGFYCGLALFLIITLFPFFVM) form a helical membrane-spanning segment. Over 32–53 (LMTSFKGAKEAISLHPTLLPQQ) the chain is Periplasmic. Residues 54-74 (WTLEHYVDIFNPMIFPFVDYF) form a helical membrane-spanning segment. An ABC transmembrane type-1 domain is found at 74–265 (FRNSLVVSVV…LPVVIMYALS (192 aa)). Over 75-77 (RNS) the chain is Cytoplasmic. The chain crosses the membrane as a helical span at residues 78–98 (LVVSVVSSVVAVFLGILGAYA). Topologically, residues 99 to 117 (LSRLRFKGRMTINASFYTV) are periplasmic. The chain crosses the membrane as a helical span at residues 118-138 (YMFSGILLVVPLFKIITALGI). Residues 139 to 140 (YD) are Cytoplasmic-facing. A helical membrane pass occupies residues 141–161 (TEMALIITMVTQTLPTAVFML). Topologically, residues 162–189 (KSYFDTIPDEIEEAAMMDGLNRLQIIFR) are periplasmic. The chain crosses the membrane as a helical span at residues 190 to 210 (ITVPLAMSGLISVFVYCFMVA). Over 211–214 (WNDY) the chain is Cytoplasmic. Residues 215 to 235 (LFASIFLSSASNFTLPVGLNA) form a helical membrane-spanning segment. Residues 236–242 (LFSTPDY) lie on the Periplasmic side of the membrane. A helical membrane pass occupies residues 243-263 (IWGRMMAASLVTALPVVIMYA). Topologically, residues 264-280 (LSERFIKSGLTAGGVKG) are cytoplasmic.

Belongs to the binding-protein-dependent transport system permease family. MalFG subfamily.

The protein resides in the cell inner membrane. Probably part of the binding-protein-dependent transport system YcjNOP. Probably responsible for the translocation of the substrate across the membrane. The sequence is that of Inner membrane ABC transporter permease protein YcjP (ycjP) from Escherichia coli (strain K12).